Here is a 641-residue protein sequence, read N- to C-terminus: Ribosomal oxygenase 1 (641 aa).

Position 1 is an N-acetylmethionine (M1). 2 disordered regions span residues 1–35 (MDGL…LPLR) and 54–80 (RTQT…DALP). Residues 12-23 (RRGRPKRRRKPQ) show a composition bias toward basic residues. S60, S63, and S109 each carry phosphoserine. The JmjC domain occupies 294–439 (CSLRLLCPQA…DFLEAILPLA (146 aa)). Fe cation-binding residues include H340, D342, and H405.

It belongs to the ROX family. NO66 subfamily. In terms of assembly, interacts with SP7/OSX; the interaction is direct. Interacts with MYC. Interacts with PHF19; leading to its recruitment to H3K36me3 sites. Requires Fe(2+) as cofactor. As to expression, widely expressed. Overexpressed in lung carcinomas.

It localises to the nucleus. The protein resides in the nucleolus. The protein localises to the nucleoplasm. It catalyses the reaction N(6),N(6)-dimethyl-L-lysyl(36)-[histone H3] + 2 2-oxoglutarate + 2 O2 = L-lysyl(36)-[histone H3] + 2 formaldehyde + 2 succinate + 2 CO2. The catalysed reaction is N(6)-methyl-L-lysyl-[protein] + 2-oxoglutarate + O2 = L-lysyl-[protein] + formaldehyde + succinate + CO2. It carries out the reaction L-histidyl-[protein] + 2-oxoglutarate + O2 = (3S)-3-hydroxy-L-histidyl-[protein] + succinate + CO2. Functionally, oxygenase that can act as both a histone lysine demethylase and a ribosomal histidine hydroxylase. Specifically demethylates 'Lys-4' (H3K4me) and 'Lys-36' (H3K36me) of histone H3, thereby playing a central role in histone code. Preferentially demethylates trimethylated H3 'Lys-4' (H3K4me3) and monomethylated H3 'Lys-4' (H3K4me1) residues, while it has weaker activity for dimethylated H3 'Lys-36' (H3K36me2). Acts as a regulator of osteoblast differentiation via its interaction with SP7/OSX by demethylating H3K4me and H3K36me, thereby inhibiting SP7/OSX-mediated promoter activation. Also catalyzes demethylation of non-histone proteins, such as CGAS: demethylation of monomethylated CGAS promotes interaction between CGAS and PARP1, followed by PARP1 inactivation. Also catalyzes the hydroxylation of 60S ribosomal protein L8 on 'His-216', thereby playing a role in ribosome biogenesis. Participates in MYC-induced transcriptional activation. The protein is Ribosomal oxygenase 1 of Homo sapiens (Human).